Consider the following 482-residue polypeptide: 2-succinylbenzoate--CoA ligase (482 aa).

It belongs to the ATP-dependent AMP-binding enzyme family. MenE subfamily.

The enzyme catalyses 2-succinylbenzoate + ATP + CoA = 2-succinylbenzoyl-CoA + AMP + diphosphate. The protein operates within quinol/quinone metabolism; 1,4-dihydroxy-2-naphthoate biosynthesis; 1,4-dihydroxy-2-naphthoate from chorismate: step 5/7. It functions in the pathway quinol/quinone metabolism; menaquinone biosynthesis. In terms of biological role, converts 2-succinylbenzoate (OSB) to 2-succinylbenzoyl-CoA (OSB-CoA). This Bacillus cereus (strain ATCC 14579 / DSM 31 / CCUG 7414 / JCM 2152 / NBRC 15305 / NCIMB 9373 / NCTC 2599 / NRRL B-3711) protein is 2-succinylbenzoate--CoA ligase.